A 270-amino-acid chain; its full sequence is Putative pyruvate, phosphate dikinase regulatory protein (270 aa).

Position 148–155 (148–155) interacts with ADP; it reads GISRTSKT.

Belongs to the pyruvate, phosphate/water dikinase regulatory protein family. PDRP subfamily.

The enzyme catalyses N(tele)-phospho-L-histidyl/L-threonyl-[pyruvate, phosphate dikinase] + ADP = N(tele)-phospho-L-histidyl/O-phospho-L-threonyl-[pyruvate, phosphate dikinase] + AMP + H(+). It carries out the reaction N(tele)-phospho-L-histidyl/O-phospho-L-threonyl-[pyruvate, phosphate dikinase] + phosphate + H(+) = N(tele)-phospho-L-histidyl/L-threonyl-[pyruvate, phosphate dikinase] + diphosphate. Bifunctional serine/threonine kinase and phosphorylase involved in the regulation of the pyruvate, phosphate dikinase (PPDK) by catalyzing its phosphorylation/dephosphorylation. The polypeptide is Putative pyruvate, phosphate dikinase regulatory protein (Bacillus cereus (strain AH187)).